The following is a 513-amino-acid chain: Protein phosphatase 1H (513 aa).

Ser-7 is modified (phosphoserine). In terms of domain architecture, PPM-type phosphatase spans 77–506 (ATGYAEVINA…DDISVYVIPL (430 aa)). The disordered stretch occupies residues 109 to 133 (TITSTPNRNSKRRSSLPNGEGLQLK). Phosphothreonine is present on Thr-113. 2 positions are modified to phosphoserine: Ser-123 and Ser-210. Arg-212 is modified (omega-N-methylarginine). At Ser-220 the chain carries Phosphoserine. Thr-223 is subject to Phosphothreonine. At Ser-421 the chain carries Phosphoserine.

Belongs to the PP2C family.

The protein resides in the nucleus. It localises to the cytoplasm. It carries out the reaction O-phospho-L-seryl-[protein] + H2O = L-seryl-[protein] + phosphate. The catalysed reaction is O-phospho-L-threonyl-[protein] + H2O = L-threonyl-[protein] + phosphate. Functionally, dephosphorylates CDKN1B at 'Thr-187', thus removing a signal for proteasomal degradation. The polypeptide is Protein phosphatase 1H (Ppm1h) (Mus musculus (Mouse)).